We begin with the raw amino-acid sequence, 447 residues long: Serine/threonine-protein phosphatase 2A 55 kDa regulatory subunit B gamma isoform (447 aa).

7 WD repeats span residues 22–61 (TPAD…KNAP), 87–128 (EIEE…KRPE), 171–209 (GHTY…RSFN), 220–260 (DLTE…LCDK), 279–317 (EIIS…RPIE), 334–375 (ENDC…DVTL), and 410–446 (DFTK…NSDM).

The protein belongs to the phosphatase 2A regulatory subunit B family. PP2A consists of a common heterodimeric core enzyme, composed of a 36 kDa catalytic subunit (subunit C) and a 65 kDa constant regulatory subunit (PR65 or subunit A), that associates with a variety of regulatory subunits. Proteins that associate with the core dimer include three families of regulatory subunits B (the R2/B/PR55/B55, R3/B''/PR72/PR130/PR59 and R5/B'/B56 families), the 48 kDa variable regulatory subunit, viral proteins, and cell signaling molecules. Interacts with IER5.

The B regulatory subunit might modulate substrate selectivity and catalytic activity, and might also direct the localization of the catalytic enzyme to a particular subcellular compartment. The polypeptide is Serine/threonine-protein phosphatase 2A 55 kDa regulatory subunit B gamma isoform (PPP2R2C) (Macaca fascicularis (Crab-eating macaque)).